The sequence spans 397 residues: Phosphoglycerate kinase (397 aa).

Residues aspartate 21–asparagine 23, arginine 37, histidine 60–arginine 63, arginine 119, and arginine 152 each bind substrate. ATP contacts are provided by residues lysine 203, glycine 294, glutamate 325, and glycine 354–serine 357.

This sequence belongs to the phosphoglycerate kinase family. Monomer.

It localises to the cytoplasm. The enzyme catalyses (2R)-3-phosphoglycerate + ATP = (2R)-3-phospho-glyceroyl phosphate + ADP. Its pathway is carbohydrate degradation; glycolysis; pyruvate from D-glyceraldehyde 3-phosphate: step 2/5. The chain is Phosphoglycerate kinase from Pelodictyon phaeoclathratiforme (strain DSM 5477 / BU-1).